The sequence spans 80 residues: Small ribosomal subunit protein bS18 (80 aa).

The protein belongs to the bacterial ribosomal protein bS18 family. As to quaternary structure, part of the 30S ribosomal subunit. Forms a tight heterodimer with protein bS6.

Functionally, binds as a heterodimer with protein bS6 to the central domain of the 16S rRNA, where it helps stabilize the platform of the 30S subunit. The protein is Small ribosomal subunit protein bS18 of Acholeplasma laidlawii (strain PG-8A).